A 228-amino-acid chain; its full sequence is 7-cyano-7-deazaguanine synthase (228 aa).

Position 9-19 (9-19 (LSGGPDSTTVL)) interacts with ATP. 4 residues coordinate Zn(2+): C193, C203, C206, and C209.

It belongs to the QueC family. Zn(2+) serves as cofactor.

It catalyses the reaction 7-carboxy-7-deazaguanine + NH4(+) + ATP = 7-cyano-7-deazaguanine + ADP + phosphate + H2O + H(+). It participates in purine metabolism; 7-cyano-7-deazaguanine biosynthesis. Catalyzes the ATP-dependent conversion of 7-carboxy-7-deazaguanine (CDG) to 7-cyano-7-deazaguanine (preQ(0)). The polypeptide is 7-cyano-7-deazaguanine synthase (Rickettsia africae (strain ESF-5)).